A 169-amino-acid polypeptide reads, in one-letter code: MICOS complex subunit MIC19 (169 aa).

Gly-2 carries N-myristoyl glycine lipidation. In terms of domain architecture, CHCH spans 123-165 (ENVCQDNENEIVRCLQENPGRVLKCAPLTEAFEKCVGEFRQQV). 2 short sequence motifs (cx9C motif) span residues 126–136 (CQDNENEIVRC) and 147–157 (CAPLTEAFEKC). 2 cysteine pairs are disulfide-bonded: Cys-126–Cys-157 and Cys-136–Cys-147.

This sequence belongs to the MICOS complex subunit Mic19 family. Metazoan Mic19 subfamily. In terms of assembly, component of the mitochondrial contact site and cristae organizing system (MICOS) complex.

It localises to the mitochondrion inner membrane. Its function is as follows. Plays a role in maintaining mitochondrial morphology. May act as a component of the MICOS complex, a large protein complex of the mitochondria. The protein is MICOS complex subunit MIC19 of Caenorhabditis elegans.